The chain runs to 45 residues: Cytochrome b559 subunit beta (45 aa).

A helical transmembrane segment spans residues 20 to 36; it reads WLAVHTLGVPTVFFLGA. Histidine 24 serves as a coordination point for heme.

It belongs to the PsbE/PsbF family. Heterodimer of an alpha subunit and a beta subunit. PSII is composed of 1 copy each of membrane proteins PsbA, PsbB, PsbC, PsbD, PsbE, PsbF, PsbH, PsbI, PsbJ, PsbK, PsbL, PsbM, PsbT, PsbX, PsbY, PsbZ, Psb30/Ycf12, peripheral proteins PsbO, CyanoQ (PsbQ), PsbU, PsbV and a large number of cofactors. It forms dimeric complexes. The cofactor is heme b.

It localises to the cellular thylakoid membrane. This b-type cytochrome is tightly associated with the reaction center of photosystem II (PSII). PSII is a light-driven water:plastoquinone oxidoreductase that uses light energy to abstract electrons from H(2)O, generating O(2) and a proton gradient subsequently used for ATP formation. It consists of a core antenna complex that captures photons, and an electron transfer chain that converts photonic excitation into a charge separation. This is Cytochrome b559 subunit beta from Nostoc punctiforme (strain ATCC 29133 / PCC 73102).